Consider the following 346-residue polypeptide: Fe(3+) ions import ATP-binding protein FbpC 2 (346 aa).

The region spanning 5-235 is the ABC transporter domain; sequence LEVDGVDKSF…PVDVPTAEFI (231 aa). Position 37–44 (37–44) interacts with ATP; that stretch reads GPSGCGKT.

Belongs to the ABC transporter superfamily. Fe(3+) ion importer (TC 3.A.1.10) family. In terms of assembly, the complex is composed of two ATP-binding proteins (FbpC), two transmembrane proteins (FbpB) and a solute-binding protein (FbpA).

It is found in the cell membrane. It carries out the reaction Fe(3+)(out) + ATP + H2O = Fe(3+)(in) + ADP + phosphate + H(+). Functionally, part of the ABC transporter complex FbpABC involved in Fe(3+) ions import. Responsible for energy coupling to the transport system. The protein is Fe(3+) ions import ATP-binding protein FbpC 2 of Rhodococcus jostii (strain RHA1).